Reading from the N-terminus, the 421-residue chain is Esterase LipQ (421 aa).

Catalysis depends on residues Ser249, Asp344, and His377.

It belongs to the 'GDXG' lipolytic enzyme family.

The catalysed reaction is hexadecanoate ester + H2O = an aliphatic alcohol + hexadecanoate + H(+). Its function is as follows. Shows lipase activity. Is highly immunogenic and may play an important role in the virulence and pathogenesis of M.tuberculosis infection, by altering the balance of cytokines. Significantly down-regulates the expression level of pro-inflammatory cytokines (TNF-alpha and IFN-gamma) and up-regulates the level of anti-inflammatory cytokines such as IL-4 and IL-10 as compared to LPS stimulated macrophages. Also inhibits the expression of iNOS, TLR2 and transcription factor NF-kappa-B in LPS stimulated macrophages whereas the expression of TLR-4 remains unchanged. The chain is Esterase LipQ from Mycobacterium tuberculosis (strain ATCC 25618 / H37Rv).